Consider the following 181-residue polypeptide: Ribosome-recycling factor (181 aa).

This sequence belongs to the RRF family.

The protein resides in the cytoplasm. Its function is as follows. Responsible for the release of ribosomes from messenger RNA at the termination of protein biosynthesis. May increase the efficiency of translation by recycling ribosomes from one round of translation to another. This Tropheryma whipplei (strain TW08/27) (Whipple's bacillus) protein is Ribosome-recycling factor.